A 263-amino-acid polypeptide reads, in one-letter code: Glutamate racemase (263 aa).

Substrate contacts are provided by residues 13 to 14 (DS) and 45 to 46 (YG). The active-site Proton donor/acceptor is the Cys-77. 78–79 (NT) contacts substrate. Cys-185 functions as the Proton donor/acceptor in the catalytic mechanism. Residue 186 to 187 (TH) participates in substrate binding.

This sequence belongs to the aspartate/glutamate racemases family.

It catalyses the reaction L-glutamate = D-glutamate. It functions in the pathway cell wall biogenesis; peptidoglycan biosynthesis. Its function is as follows. Provides the (R)-glutamate required for cell wall biosynthesis. The polypeptide is Glutamate racemase (Vibrio vulnificus (strain YJ016)).